Reading from the N-terminus, the 516-residue chain is GMP synthase [glutamine-hydrolyzing] (516 aa).

In terms of domain architecture, Glutamine amidotransferase type-1 spans 8-198; the sequence is KILILDFGSQ…VVNICGCDTL (191 aa). The active-site Nucleophile is the cysteine 84. Residues histidine 172 and glutamate 174 contribute to the active site. The 193-residue stretch at 199-391 folds into the GMPS ATP-PPase domain; sequence WNIENIIEND…LGLPYNMLYR (193 aa). 226–232 serves as a coordination point for ATP; the sequence is SGGVDSS.

In terms of assembly, homodimer.

It catalyses the reaction XMP + L-glutamine + ATP + H2O = GMP + L-glutamate + AMP + diphosphate + 2 H(+). The protein operates within purine metabolism; GMP biosynthesis; GMP from XMP (L-Gln route): step 1/1. Catalyzes the synthesis of GMP from XMP. In Francisella tularensis subsp. tularensis (strain WY96-3418), this protein is GMP synthase [glutamine-hydrolyzing].